Consider the following 439-residue polypeptide: SET domain-containing protein 4 (439 aa).

The span at 1–19 (MQRRRGRTERARKRRRRSS) shows a compositional bias: basic residues. The interval 1–25 (MQRRRGRTERARKRRRRSSGSRAVN) is disordered. The SET domain maps to 47–272 (TDLVPASFPG…KHQEVFICYG (226 aa)). Tyr-271 lines the S-adenosyl-L-methionine pocket.

The protein belongs to the class V-like SAM-binding methyltransferase superfamily. SETD4 family. Forms a ternary complex with TBK1 and ZNF268; the interaction with TBK1 is ZNF268-dependent and leads to TBK1 monomethylation. Expressed in the forebrain subventricular zone, in quiescent neural stem cells.

It is found in the cytoplasm. It localises to the cytosol. The protein localises to the nucleus. It catalyses the reaction L-lysyl(4)-[histone H3] + S-adenosyl-L-methionine = N(6)-methyl-L-lysyl(4)-[histone H3] + S-adenosyl-L-homocysteine + H(+). The catalysed reaction is N(6)-methyl-L-lysyl(4)-[histone H3] + S-adenosyl-L-methionine = N(6),N(6)-dimethyl-L-lysyl(4)-[histone H3] + S-adenosyl-L-homocysteine + H(+). It carries out the reaction L-lysyl(20)-[histone H4] + S-adenosyl-L-methionine = N(6)-methyl-L-lysyl(20)-[histone H4] + S-adenosyl-L-homocysteine + H(+). The enzyme catalyses N(6)-methyl-L-lysyl(20)-[histone H4] + S-adenosyl-L-methionine = N(6),N(6)-dimethyl-L-lysyl(20)-[histone H4] + S-adenosyl-L-homocysteine + H(+). It catalyses the reaction N(6),N(6)-dimethyl-L-lysyl(20)-[histone H4] + S-adenosyl-L-methionine = N(6),N(6),N(6)-trimethyl-L-lysyl(20)-[histone H4] + S-adenosyl-L-homocysteine + H(+). The catalysed reaction is L-lysyl-[protein] + S-adenosyl-L-methionine = N(6)-methyl-L-lysyl-[protein] + S-adenosyl-L-homocysteine + H(+). Protein-lysine N-methyltransferase that methylates both histones and non-histone proteins. Via its catalytic activity, regulates many processes, including cell proliferation, cell differentiation, inflammatory response and apoptosis. Regulates the inflammatory response by mediating mono- and dimethylation of 'Lys-4' of histone H3 (H3K4me1 and H3K4me2, respectively), leading to activate the transcription of pro-inflammatory cytokines IL6 and TNF-alpha. Also involved in the regulation of stem cell quiescence by catalyzing the trimethylation of 'Lys-20' of histone H4 (H4K20me3), thereby promoting heterochromatin formation. In the brain, epigenetically controls quiescence of neural stem cells for sustaining a protected neural stem cell population and maintaining a stem cell reservoir for neurogenesis. Involved in proliferation, migration, paracrine and myogenic differentiation of bone marrow mesenchymal stem cells (BMSCs). Through the catalysis of XRCC5/Ku70 trimethylation, regulates BAX-mediated apoptosis. SETD4-catalyzed XRCC5 methylation results in XRCC5 translocation to the cytoplasm, where it interacts with BAX, sequestering it from the mitochondria, hence preventing BAX-mediated apoptosis. This is SET domain-containing protein 4 from Mus musculus (Mouse).